We begin with the raw amino-acid sequence, 406 residues long: Serine hydroxymethyltransferase (406 aa).

(6S)-5,6,7,8-tetrahydrofolate-binding positions include leucine 111 and 115–117; that span reads GHL. Lysine 220 is modified (N6-(pyridoxal phosphate)lysine). 340-342 provides a ligand contact to (6S)-5,6,7,8-tetrahydrofolate; the sequence is SAF.

Belongs to the SHMT family. As to quaternary structure, homodimer. Pyridoxal 5'-phosphate is required as a cofactor.

The protein resides in the cytoplasm. It catalyses the reaction (6R)-5,10-methylene-5,6,7,8-tetrahydrofolate + glycine + H2O = (6S)-5,6,7,8-tetrahydrofolate + L-serine. It functions in the pathway one-carbon metabolism; tetrahydrofolate interconversion. It participates in amino-acid biosynthesis; glycine biosynthesis; glycine from L-serine: step 1/1. Its function is as follows. Catalyzes the reversible interconversion of serine and glycine with tetrahydrofolate (THF) serving as the one-carbon carrier. This reaction serves as the major source of one-carbon groups required for the biosynthesis of purines, thymidylate, methionine, and other important biomolecules. Also exhibits THF-independent aldolase activity toward beta-hydroxyamino acids, producing glycine and aldehydes, via a retro-aldol mechanism. The chain is Serine hydroxymethyltransferase from Mycoplasma genitalium (strain ATCC 33530 / DSM 19775 / NCTC 10195 / G37) (Mycoplasmoides genitalium).